The following is a 115-amino-acid chain: Translation initiation factor 1A 2 (115 aa).

A disordered region spans residues 1–34; that stretch reads MANYRSTIRHRNSGSRKSVSGDTHEVTRVRTPQK. The span at 22–34 shows a compositional bias: basic and acidic residues; the sequence is DTHEVTRVRTPQK. The 75-residue stretch at 27-101 folds into the S1-like domain; it reads TRVRTPQKDR…SKADVTWKYT (75 aa).

This sequence belongs to the eIF-1A family.

Seems to be required for maximal rate of protein biosynthesis. Enhances ribosome dissociation into subunits and stabilizes the binding of the initiator Met-tRNA(I) to 40 S ribosomal subunits. This is Translation initiation factor 1A 2 from Methanosarcina barkeri (strain Fusaro / DSM 804).